We begin with the raw amino-acid sequence, 240 residues long: Ion-translocating oxidoreductase complex subunit E (240 aa).

5 helical membrane-spanning segments follow: residues Leu41–Val61, Leu71–Ala91, Glu95–Gly115, Ser130–Leu150, and Gly184–Leu204.

It belongs to the NqrDE/RnfAE family. As to quaternary structure, the complex is composed of six subunits: RnfA, RnfB, RnfC, RnfD, RnfE and RnfG.

The protein localises to the cell inner membrane. In terms of biological role, part of a membrane-bound complex that couples electron transfer with translocation of ions across the membrane. This is Ion-translocating oxidoreductase complex subunit E from Pseudomonas aeruginosa (strain ATCC 15692 / DSM 22644 / CIP 104116 / JCM 14847 / LMG 12228 / 1C / PRS 101 / PAO1).